Consider the following 287-residue polypeptide: Elongation factor Ts (287 aa).

The tract at residues 80-83 is involved in Mg(2+) ion dislocation from EF-Tu; that stretch reads TDFL.

The protein belongs to the EF-Ts family.

Its subcellular location is the cytoplasm. In terms of biological role, associates with the EF-Tu.GDP complex and induces the exchange of GDP to GTP. It remains bound to the aminoacyl-tRNA.EF-Tu.GTP complex up to the GTP hydrolysis stage on the ribosome. The polypeptide is Elongation factor Ts (Pseudomonas putida (strain ATCC 47054 / DSM 6125 / CFBP 8728 / NCIMB 11950 / KT2440)).